The following is a 780-amino-acid chain: Pendrin (780 aa).

The Cytoplasmic segment spans residues 1-87 (MAARGGRSEP…YRVKEWLLSD (87 aa)). The helical transmembrane segment at 88 to 108 (IISGVSTGLVGTLQGMAYALL) threads the bilayer. Position 109 (Ala-109) is a topological domain, extracellular. The helical transmembrane segment at 110–130 (AVPVQFGLYSAFFPILTYFVF) threads the bilayer. The Cytoplasmic portion of the chain corresponds to 131 to 135 (GTSRH). The chain crosses the membrane as a helical span at residues 136-156 (ISVGPFPVVSLMVGSVVLSMA). At 157 to 191 (PDDHFLVPSGNGSALNSTTLDTGTRDAARVLLAST) the chain is on the extracellular side. The helical transmembrane segment at 192–212 (LTLLVGIIQLVFGGLQIGFIV) threads the bilayer. Residues 213-218 (RYLADP) lie on the Cytoplasmic side of the membrane. Residues 219–239 (LVGGFTTAAAFQVLVSQLKIV) traverse the membrane as a helical segment. At 240-263 (LNVSTKNYNGILSIIYTLIEIFQN) the chain is on the extracellular side. The chain crosses the membrane as a helical span at residues 264-284 (IGDTNIADFIAGLLTIIVCMA). At 285-295 (VKELNDRFKHR) the chain is on the cytoplasmic side. Residues 296–316 (IPVPIPIEVIVTIIATAISYG) traverse the membrane as a helical segment. The Extracellular segment spans residues 317–344 (ANLEKNYNAGIVKSIPSGFLPPVLPSVG). The helical transmembrane segment at 345-365 (LFSDMLAASFSIAVVAYAIAV) threads the bilayer. Topologically, residues 366–384 (SVGKVYATKHDYVIDGNQE) are cytoplasmic. Residues 385–405 (FIAFGISNVFSGFFSCFVATT) traverse the membrane as a helical segment. Residues 406–421 (ALSRTAVQESTGGKTQ) are Extracellular-facing. The helical transmembrane segment at 422–442 (VAGLISAVIVMVAIVALGRLL) threads the bilayer. The Cytoplasmic portion of the chain corresponds to 443 to 448 (EPLQKS). The chain crosses the membrane as a helical span at residues 449-469 (VLAAVVIANLKGMFMQVCDVP). The Extracellular portion of the chain corresponds to 470–486 (RLWKQNKTDAVIWVFTC). A helical membrane pass occupies residues 487–507 (IMSIILGLDLGLLAGLLFALL). Topologically, residues 508–780 (TVVLRVQFPS…QDEAMRRLAS (273 aa)) are cytoplasmic. One can recognise an STAS domain in the interval 535–729 (HYKNLEEPEG…LTVHDAILHL (195 aa)).

Belongs to the SLC26A/SulP transporter (TC 2.A.53) family. As to quaternary structure, interacts with IQGAP1. This interaction enhances the chloride-bicarbonate exchange activity of SLC26A4. As to expression, highly expressed in the kidney (at protein level). Throughout the endolymphatic duct and sac, in distinct areas of the utricle and saccule, and in the external sulcus region within the cochlea. Expressed in the parotid gland.

Its subcellular location is the apical cell membrane. The protein localises to the cell membrane. It catalyses the reaction chloride(in) = chloride(out). It carries out the reaction iodide(out) = iodide(in). The enzyme catalyses hydrogencarbonate(in) + chloride(out) = hydrogencarbonate(out) + chloride(in). The catalysed reaction is iodide(in) + hydrogencarbonate(out) = iodide(out) + hydrogencarbonate(in). It catalyses the reaction iodide(in) + chloride(out) = iodide(out) + chloride(in). It carries out the reaction formate(in) + chloride(out) = formate(out) + chloride(in). Sodium-independent transporter of chloride and iodide. Mediates electroneutral iodide-chloride, iodide-bicarbonate and chloride-bicarbonate exchange with 1:1 stoichiometry. Mediates elctroneutral chloride-formate exchange. The sequence is that of Pendrin (Slc26a4) from Mus musculus (Mouse).